A 675-amino-acid polypeptide reads, in one-letter code: MIKLIIDGSEIEISEGSTVYQACIQAGKEIPHFCYHARLKIAGNCRMCLVEIEKSQKPVASCAMPVSKGMVIHTDTPMVKKAREGVMEFLLINHPLDCPICDQGGECDLQDQAFRYGKGTNRFHENKRSIKDKYMGPLIKTAMTRCIQCTRCIRLANDIAGIEEIGAINRGEHMEVTSYLEQTLDSEISGNMIDICPVGALNSKPYAFKARKWELKHTASIGVHDAEGSNIRIDSRADEIMRILPRVNEAINEEWLSDKNRFCYDGLKYQRLDHPYIRKNGKLVEVSWSEAFKTIMDKIKSVKPEKIAAIAGSIVSVEAMFMLKILLQKLGSNNYTVNQFNYKIDTSERGNYLFNTTIVGVEKADLCLLIGANTRQIAPILNSRIGRRVRIGALKVVRIGIGHNQTYKIQDLGNDIKIIEDLAIGTHEYTKAFKEAKYPMIIVGDGVYGRDDGYAVLSLIHKVVDKYNMMRDDWQGFNILHNHASIVGGLDIGFNTTIKFEGIKLAYLLGADAIPFDKLKSAFIIYQGHHGDVGAMSADVILPAAAYTEQSGIYVNLEGRPQIAQKAVSTVGGAKEDIEIIKEIAGYLKIDIGMDNLQEVRIRLAKEYNVFANIDKITVNKFTKFISIDKLSKDPIAARPINYYMTDVISKNSVTMAKCVEAHEERKRDVAKVFY.

Residues 1–78 enclose the 2Fe-2S ferredoxin-type domain; that stretch reads MIKLIIDGSE…GMVIHTDTPM (78 aa). Residues C34, C45, C48, and C62 each contribute to the [2Fe-2S] cluster site. Residues 78–117 form the 4Fe-4S His(Cys)3-ligated-type domain; it reads MVKKAREGVMEFLLINHPLDCPICDQGGECDLQDQAFRYG. [4Fe-4S] cluster-binding residues include H94, C98, C101, C107, C146, C149, C152, and C196. Residues 215–271 enclose the 4Fe-4S Mo/W bis-MGD-type domain; that stretch reads LKHTASIGVHDAEGSNIRIDSRADEIMRILPRVNEAINEEWLSDKNRFCYDGLKYQR.

Belongs to the complex I 75 kDa subunit family. [2Fe-2S] cluster serves as cofactor. The cofactor is [4Fe-4S] cluster.

The catalysed reaction is a quinone + NADH + 5 H(+)(in) = a quinol + NAD(+) + 4 H(+)(out). In terms of biological role, NDH-1 shuttles electrons from NADH, via FMN and iron-sulfur (Fe-S) centers, to quinones in the respiratory chain. Couples the redox reaction to proton translocation (for every two electrons transferred, four hydrogen ions are translocated across the cytoplasmic membrane), and thus conserves the redox energy in a proton gradient. The sequence is that of NADH-quinone oxidoreductase subunit G (nuoG) from Rickettsia prowazekii (strain Madrid E).